Consider the following 407-residue polypeptide: Protein ZNF365 (407 aa).

Phosphoserine is present on serine 16. The C2H2-type; degenerate zinc-finger motif lies at 26–51; the sequence is LRCPRCGDHTRFRSLSSLRAHLEFSH. Serine 138 is subject to Phosphoserine. Positions 169-297 form a coiled coil; that stretch reads VEAVDRTIEK…QLEYYQSQQA (129 aa). Position 175 is a phosphothreonine (threonine 175). The disordered stretch occupies residues 347–392; the sequence is LKKAKDDRASMQPAKAIHEQAESSRDLCRPPKKGELLGFGRKGNIR. A compositionally biased stretch (basic and acidic residues) spans 362–381; it reads AIHEQAESSRDLCRPPKKGE. At serine 369 the chain carries Phosphoserine.

Homodimer. Interacts with NDE1 and NDEL1. Does not interact with TUBG1. Interacts with DISC1. Interacts with PARP1. Interacts with MCRS1. Isoform 1 is expressed in brain. Isoform 2 is expressed in placenta and at low level in lung and liver. Isoform 3 is expressed in kidney and pancreas. Isoform 1 is expressed exclusively in brain.

Its subcellular location is the cytoplasm. The protein localises to the cytoskeleton. It localises to the microtubule organizing center. The protein resides in the centrosome. Functionally, involved in the regulation of neurogenesis. Negatively regulates neurite outgrowth. Involved in the morphogenesis of basket cells in the somatosensory cortex during embryogenesis. Involved in the positive regulation of oligodendrocyte differentiation during postnatal growth. Involved in dendritic arborization, morphogenesis of spine density dendrite, and establishment of postsynaptic dendrite density in cortical pyramidal neurons. Involved in homologous recombination (HR) repair pathway. Required for proper resolution of DNA double-strand breaks (DSBs) by HR. Is required for recovery of stalled replication forks, and directly contributes to genomic stability. Interacts with PARP1 and mediates MRE11-dependent DNA end resection during replication fork recovery. Contributes to genomic stability by preventing telomere dysfunction. This is Protein ZNF365 (ZNF365) from Homo sapiens (Human).